The following is a 660-amino-acid chain: Bifunctional polymyxin resistance protein ArnA (660 aa).

Residues 1–304 (MKAVVFAYHD…TLGLVEGSRL (304 aa)) are formyltransferase ArnAFT. His104 serves as the catalytic Proton donor; for formyltransferase activity. (6R)-10-formyltetrahydrofolate contacts are provided by residues Arg114 and 136–140 (VAKAD). The dehydrogenase ArnADH stretch occupies residues 314 to 660 (RRTRVLILGV…RTVDIVEKSS (347 aa)). Residues Asp347 and 368–369 (DI) each bind NAD(+). Residues Ala393, Tyr398, and 432–433 (TS) each bind UDP-alpha-D-glucuronate. Glu434 serves as the catalytic Proton acceptor; for decarboxylase activity. UDP-alpha-D-glucuronate-binding positions include Arg460, Asn492, 526–535 (KLIDGGKQKR), and Tyr613. Arg619 acts as the Proton donor; for decarboxylase activity in catalysis.

This sequence in the N-terminal section; belongs to the Fmt family. UDP-L-Ara4N formyltransferase subfamily. The protein in the C-terminal section; belongs to the NAD(P)-dependent epimerase/dehydratase family. UDP-glucuronic acid decarboxylase subfamily. In terms of assembly, homohexamer, formed by a dimer of trimers.

The catalysed reaction is UDP-alpha-D-glucuronate + NAD(+) = UDP-beta-L-threo-pentopyranos-4-ulose + CO2 + NADH. It catalyses the reaction UDP-4-amino-4-deoxy-beta-L-arabinose + (6R)-10-formyltetrahydrofolate = UDP-4-deoxy-4-formamido-beta-L-arabinose + (6S)-5,6,7,8-tetrahydrofolate + H(+). It participates in nucleotide-sugar biosynthesis; UDP-4-deoxy-4-formamido-beta-L-arabinose biosynthesis; UDP-4-deoxy-4-formamido-beta-L-arabinose from UDP-alpha-D-glucuronate: step 1/3. It functions in the pathway nucleotide-sugar biosynthesis; UDP-4-deoxy-4-formamido-beta-L-arabinose biosynthesis; UDP-4-deoxy-4-formamido-beta-L-arabinose from UDP-alpha-D-glucuronate: step 3/3. Its pathway is bacterial outer membrane biogenesis; lipopolysaccharide biosynthesis. In terms of biological role, bifunctional enzyme that catalyzes the oxidative decarboxylation of UDP-glucuronic acid (UDP-GlcUA) to UDP-4-keto-arabinose (UDP-Ara4O) and the addition of a formyl group to UDP-4-amino-4-deoxy-L-arabinose (UDP-L-Ara4N) to form UDP-L-4-formamido-arabinose (UDP-L-Ara4FN). The modified arabinose is attached to lipid A and is required for resistance to polymyxin and cationic antimicrobial peptides. This Escherichia fergusonii (strain ATCC 35469 / DSM 13698 / CCUG 18766 / IAM 14443 / JCM 21226 / LMG 7866 / NBRC 102419 / NCTC 12128 / CDC 0568-73) protein is Bifunctional polymyxin resistance protein ArnA.